The sequence spans 148 residues: Small ribosomal subunit protein bS6 (148 aa).

Residues 96-148 (HEEGQSAMLTRRDDRRERDGDDRPRRREGGFDRGDRGDRGPRRPRDNEAGEGA) form a disordered region.

The protein belongs to the bacterial ribosomal protein bS6 family.

Binds together with bS18 to 16S ribosomal RNA. This is Small ribosomal subunit protein bS6 from Brucella abortus biovar 1 (strain 9-941).